A 305-amino-acid chain; its full sequence is Peroxisome assembly protein 26 (305 aa).

Residues 1–246 (MKSDASTSAA…RRLWGSVVSH (246 aa)) are Cytoplasmic-facing. The chain crosses the membrane as a helical; Signal-anchor for type II membrane protein span at residues 247–267 (LLSQPFRKGLLAALILCLLIL). The Peroxisomal matrix portion of the chain corresponds to 268 to 305 (RFDPAAPSSLPFLYQLTQLFRRIQKATLSRLYPLALRD).

The protein belongs to the peroxin-26 family. In terms of assembly, interacts (via its cytoplasmic domain) with PEX6; interaction is direct and is ATP-dependent. Interacts with PEX1; interaction is indirect and is mediated via interaction with PEX6.

Its subcellular location is the peroxisome membrane. Functionally, peroxisomal docking factor that anchors PEX1 and PEX6 to peroxisome membranes. PEX26 is therefore required for the formation of the PEX1-PEX6 AAA ATPase complex, a complex that mediates the extraction of the PEX5 receptor from peroxisomal membrane. The sequence is that of Peroxisome assembly protein 26 from Mus musculus (Mouse).